The following is a 536-amino-acid chain: CTP synthase (536 aa).

The segment at 1–267 (MSKFVFVTGG…CKETLKYLEL (267 aa)) is amidoligase domain. Ser13 is a binding site for CTP. Ser13 is a binding site for UTP. Residues 14-19 (SIGKGI) and Asp71 each bind ATP. Positions 71 and 141 each coordinate Mg(2+). CTP contacts are provided by residues 148–150 (DIE), 188–193 (KTKPTQ), and Lys224. UTP is bound by residues 188-193 (KTKPTQ) and Lys224. Residues 292-534 (KVALVGKYIE…IKSSQENLTQ (243 aa)) enclose the Glutamine amidotransferase type-1 domain. L-glutamine is bound at residue Gly354. The active-site Nucleophile; for glutamine hydrolysis is the Cys381. L-glutamine contacts are provided by residues 382–385 (LGMQ), Glu405, and Arg462. Residues His507 and Glu509 contribute to the active site.

It belongs to the CTP synthase family. As to quaternary structure, homotetramer.

It carries out the reaction UTP + L-glutamine + ATP + H2O = CTP + L-glutamate + ADP + phosphate + 2 H(+). It catalyses the reaction L-glutamine + H2O = L-glutamate + NH4(+). The catalysed reaction is UTP + NH4(+) + ATP = CTP + ADP + phosphate + 2 H(+). It participates in pyrimidine metabolism; CTP biosynthesis via de novo pathway; CTP from UDP: step 2/2. Allosterically activated by GTP, when glutamine is the substrate; GTP has no effect on the reaction when ammonia is the substrate. The allosteric effector GTP functions by stabilizing the protein conformation that binds the tetrahedral intermediate(s) formed during glutamine hydrolysis. Inhibited by the product CTP, via allosteric rather than competitive inhibition. Catalyzes the ATP-dependent amination of UTP to CTP with either L-glutamine or ammonia as the source of nitrogen. Regulates intracellular CTP levels through interactions with the four ribonucleotide triphosphates. The sequence is that of CTP synthase from Prochlorococcus marinus (strain MIT 9312).